Here is a 450-residue protein sequence, read N- to C-terminus: Probable galactarate/D-glucarate transporter GudP (450 aa).

The Cytoplasmic segment spans residues 1–20; that stretch reads MSSLSQAASSVEKRTNARYW. A helical transmembrane segment spans residues 21–41; sequence IVVMLFIVTSFNYGDRATLSI. Residues 42 to 58 lie on the Periplasmic side of the membrane; it reads AGSEMAKDIGLDPVGMG. Residues 59-79 form a helical membrane-spanning segment; it reads YVFSAFSWAYVIGQIPGGWLL. Residues 80–85 are Cytoplasmic-facing; sequence DRFGSK. The chain crosses the membrane as a helical span at residues 86–105; that stretch reads RVYFWSIFIWSMFTLLQGFV. At 106-109 the chain is on the periplasmic side; that stretch reads DIFS. The helical transmembrane segment at 110 to 132 threads the bilayer; it reads GFGIIVALFTLRFLVGLAEAPSF. The Cytoplasmic portion of the chain corresponds to 133–153; sequence PGNSRIVAAWFPAQERGTAVS. Residues 154 to 174 form a helical membrane-spanning segment; sequence IFNSAQYFATVIFAPIMGWLT. Residues 175–176 are Periplasmic-facing; the sequence is HE. Residues 177-197 traverse the membrane as a helical segment; that stretch reads VGWSHVFFFMGGLGIVISFIW. At 198 to 254 the chain is on the cytoplasmic side; sequence LKVIHEPNQHPGVNKKELEYIAAGGALINMDQQNTKVKVPFSVKWGQIKQLLGSRMM. A helical membrane pass occupies residues 255-275; the sequence is IGVYIGQYCINALTYFFITWF. Residues 276–290 are Periplasmic-facing; it reads PVYLVQARGMSILKA. A helical membrane pass occupies residues 291 to 311; sequence GFVASVPAVCGFIGGVLGGII. The Cytoplasmic portion of the chain corresponds to 312-329; sequence SDWLMRRTGSLNIARKTP. Residues 330 to 350 traverse the membrane as a helical segment; the sequence is IVMGMLLSMVMVFCNYVNVEW. A topological domain (periplasmic) is located at residue Met-351. The chain crosses the membrane as a helical span at residues 352–372; that stretch reads IIGFMALAFFGKGIGALGWAV. Topologically, residues 373-387 are cytoplasmic; the sequence is MADTAPKEISGLSGG. A helical transmembrane segment spans residues 388–408; that stretch reads LFNMFGNISGIVTPIAIGYIV. Residues 409–415 lie on the Periplasmic side of the membrane; sequence GTTGSFN. The chain crosses the membrane as a helical span at residues 416–436; that stretch reads GALIYVGVHALIAVLSYLVLV. The Cytoplasmic portion of the chain corresponds to 437 to 450; it reads GDIKRIELKPVAGQ.

The protein belongs to the major facilitator superfamily. Phthalate permease family.

Its subcellular location is the cell inner membrane. The catalysed reaction is galactarate(in) + H(+)(in) = galactarate(out) + H(+)(out). It catalyses the reaction D-glucarate(in) + H(+)(in) = D-glucarate(out) + H(+)(out). It carries out the reaction (R)-glycerate(in) + H(+)(in) = (R)-glycerate(out) + H(+)(out). Probably involved in the uptake of galactarate and/or D-glucarate. May also transport D-glycerate. In Escherichia coli (strain K12), this protein is Probable galactarate/D-glucarate transporter GudP.